The following is a 134-amino-acid chain: L-ectoine synthase (134 aa).

This sequence belongs to the ectoine synthase family.

The enzyme catalyses (2S)-4-acetamido-2-aminobutanoate = L-ectoine + H2O. The protein operates within amine and polyamine biosynthesis; ectoine biosynthesis; L-ectoine from L-aspartate 4-semialdehyde: step 3/3. Catalyzes the circularization of gamma-N-acetyl-alpha,gamma-diaminobutyric acid (ADABA) to ectoine (1,4,5,6-tetrahydro-2-methyl-4-pyrimidine carboxylic acid), which is an excellent osmoprotectant. This chain is L-ectoine synthase, found in Thermobifida fusca (strain YX).